Consider the following 358-residue polypeptide: tRNA-specific 2-thiouridylase MnmA (358 aa).

Residues 6–13 and isoleucine 32 contribute to the ATP site; that span reads LVSGGVDS. Residues 93-95 are interaction with target base in tRNA; that stretch reads NPD. Cysteine 98 acts as the Nucleophile in catalysis. A disulfide bridge links cysteine 98 with cysteine 193. Glycine 121 provides a ligand contact to ATP. Positions 143-145 are interaction with tRNA; sequence KDQ. Cysteine 193 functions as the Cysteine persulfide intermediate in the catalytic mechanism.

The protein belongs to the MnmA/TRMU family.

The protein localises to the cytoplasm. The catalysed reaction is S-sulfanyl-L-cysteinyl-[protein] + uridine(34) in tRNA + AH2 + ATP = 2-thiouridine(34) in tRNA + L-cysteinyl-[protein] + A + AMP + diphosphate + H(+). In terms of biological role, catalyzes the 2-thiolation of uridine at the wobble position (U34) of tRNA, leading to the formation of s(2)U34. The polypeptide is tRNA-specific 2-thiouridylase MnmA (Parabacteroides distasonis (strain ATCC 8503 / DSM 20701 / CIP 104284 / JCM 5825 / NCTC 11152)).